We begin with the raw amino-acid sequence, 389 residues long: Endonuclease 8-like 1 (389 aa).

The active-site Schiff-base intermediate with DNA is Pro-2. Catalysis depends on Glu-3, which acts as the Proton donor. Lys-54 functions as the Proton donor; for beta-elimination activity in the catalytic mechanism. Residue Asn-176 participates in DNA binding. Residues 278-389 (TIWFQGDPGP…PREAGESSAS (112 aa)) form a disordered region. Residues 322–333 (SRMRRARKHPPK) show a composition bias toward basic residues. Residues 336-351 (AQQSEGAGLQQNQETP) show a composition bias toward polar residues. Basic residues predominate over residues 357-373 (GKRRGQRASTGHRRRPK). Over residues 374 to 389 (TIPDTRPREAGESSAS) the composition is skewed to basic and acidic residues.

The protein belongs to the FPG family. In terms of tissue distribution, detected in heart, spleen and lung.

Its subcellular location is the cytoplasm. The protein localises to the cytoskeleton. It localises to the microtubule organizing center. It is found in the centrosome. The protein resides in the nucleus. Its subcellular location is the chromosome. It catalyses the reaction 2'-deoxyribonucleotide-(2'-deoxyribose 5'-phosphate)-2'-deoxyribonucleotide-DNA = a 3'-end 2'-deoxyribonucleotide-(2,3-dehydro-2,3-deoxyribose 5'-phosphate)-DNA + a 5'-end 5'-phospho-2'-deoxyribonucleoside-DNA + H(+). In terms of biological role, involved in base excision repair of DNA damaged by oxidation or by mutagenic agents. Acts as a DNA glycosylase that recognizes and removes damaged bases. Has a preference for oxidized pyrimidines, such as thymine glycol, formamidopyrimidine (Fapy) and 5-hydroxyuracil. Has marginal activity towards 8-oxoguanine. Has AP (apurinic/apyrimidinic) lyase activity and introduces nicks in the DNA strand. Cleaves the DNA backbone by beta-delta elimination to generate a single-strand break at the site of the removed base with both 3'- and 5'-phosphates. Has DNA glycosylase/lyase activity towards mismatched uracil and thymine, in particular in U:C and T:C mismatches. Specifically binds 5-hydroxymethylcytosine (5hmC), suggesting that it acts as a specific reader of 5hmC. The polypeptide is Endonuclease 8-like 1 (Neil1) (Mus musculus (Mouse)).